The primary structure comprises 412 residues: POU domain, class 4, transcription factor 2 (412 aa).

Positions leucine 29 to proline 96 are disordered. Low complexity predominate over residues serine 31–alanine 53. 2 stretches are compositionally biased toward gly residues: residues glycine 54–arginine 70 and glycine 78–serine 87. Residues cysteine 94 to histidine 240 form a required for transcriptional activation region. The POU-IV box motif lies at arginine 113–isoleucine 122. The interval valine 123 to leucine 191 is disordered. A compositionally biased stretch (basic residues) spans lysine 127–proline 138. The segment covering proline 152–alanine 169 has biased composition (low complexity). Residues threonine 173–proline 187 show a composition bias toward basic residues. The short motif at histidine 174–histidine 188 is the Nuclear speckle targeting signal element. Positions alanine 241–isoleucine 412 are required for DNA-binding and transcriptional repression. The POU-specific domain occupies aspartate 253–glutamate 330. Positions lysine 348 to lysine 407 form a DNA-binding region, homeobox.

This sequence belongs to the POU transcription factor family. Class-4 subfamily. Interacts with POU4F1; this interaction inhibits both POU4F1 DNA-binding and transcriptional activities. Interacts (C-terminus) with ESR1 (via DNA-binding domain); this interaction increases the estrogen receptor ESR1 transcriptional activity in a DNA- and ligand 17-beta-estradiol-independent manner. Interacts (via C-terminus) with TP53 (via N-terminus). Interacts with DLX1 (via homeobox DNA-binding domain); this interaction suppresses DLX1-mediated transcriptional activity in postnatal retina enhancing retinal ganglion cell (RGC) differentiation. Interacts with DLX2 (via homeobox DNA-binding domain); this interaction enhances RGC differentiation. Interacts (via C-terminus) with ISL1 (via C-terminus). Interacts with ISL2. Interacts with LHX2. As to expression, expressed in the heart, brain and spinal cord. Expressed in cardiomyocytes (at protein level). Expressed in brain and spinal cord. Expressed in dorsal root ganglion (RGD) neurons.

Its subcellular location is the nucleus. The protein localises to the nucleus speckle. It localises to the cytoplasm. Tissue-specific DNA-binding transcription factor involved in the development and differentiation of target cells. Functions either as activator or repressor modulating the rate of target gene transcription through RNA polymerase II enzyme in a promoter-dependent manner. Binds to the consensus octamer motif 5'-AT[A/T]A[T/A]T[A/T]A-3' of promoter of target genes. Plays a fundamental role in the gene regulatory network essential for retinal ganglion cell (RGC) differentiation. Binds to an octamer site to form a ternary complex with ISL1; cooperates positively with ISL1 and ISL2 to potentiate transcriptional activation of RGC target genes being involved in RGC fate commitment in the developing retina and RGC axon formation and pathfinding. Inhibits DLX1 and DLX2 transcriptional activities preventing DLX1- and DLX2-mediated ability to promote amacrine cell fate specification. In cooperation with TP53 potentiates transcriptional activation of BAX promoter activity increasing neuronal cell apoptosis. Negatively regulates BAX promoter activity in the absence of TP53. Acts as a transcriptional coactivator via its interaction with the transcription factor ESR1 by enhancing its effect on estrogen response element (ERE)-containing promoter. Antagonizes the transcriptional stimulatory activity of POU4F1 by preventing its binding to an octamer motif. Involved in TNFSF11-mediated terminal osteoclast differentiation. This chain is POU domain, class 4, transcription factor 2, found in Rattus norvegicus (Rat).